Consider the following 205-residue polypeptide: CASP-like protein 2A1 (205 aa).

Positions 1–25 (MDKSKVSTAVGGETPVGLITGSRDD) are disordered. Residues 1-34 (MDKSKVSTAVGGETPVGLITGSRDDELESGSMRT) lie on the Cytoplasmic side of the membrane. The helical transmembrane segment at 35–55 (AETVLRLVPMAFCISALVLML) threads the bilayer. At 56 to 76 (KNSQTNDFGTLSYSDLGAFRY) the chain is on the extracellular side. Residues 77–97 (LVHANGICAGYSLLSAIIVAM) traverse the membrane as a helical segment. The Cytoplasmic portion of the chain corresponds to 98 to 105 (PRPSTMSR). The chain crosses the membrane as a helical span at residues 106–126 (AWTFFFLDQVLTYVILAAAAV). Topologically, residues 127 to 156 (SVEALYLARKGDIAITWSAACVSFGGFCHK) are extracellular. The chain crosses the membrane as a helical span at residues 157–177 (AITSAVITFIVVVCYALLSLV). Topologically, residues 178–205 (SSYKLFSRYGAPDVSYPGKGIEVAAFHS) are cytoplasmic.

It belongs to the Casparian strip membrane proteins (CASP) family. In terms of assembly, homodimer and heterodimers.

It localises to the cell membrane. This chain is CASP-like protein 2A1, found in Ricinus communis (Castor bean).